Consider the following 694-residue polypeptide: Polyphosphate kinase (694 aa).

N45 lines the ATP pocket. Residues R367 and R397 each contribute to the Mg(2+) site. The active-site Phosphohistidine intermediate is the H427. ATP-binding residues include Y460, R553, and H580.

Belongs to the polyphosphate kinase 1 (PPK1) family. Mg(2+) serves as cofactor. An intermediate of this reaction is the autophosphorylated ppk in which a phosphate is covalently linked to a histidine residue through a N-P bond.

It catalyses the reaction [phosphate](n) + ATP = [phosphate](n+1) + ADP. Its function is as follows. Catalyzes the reversible transfer of the terminal phosphate of ATP to form a long-chain polyphosphate (polyP). This Campylobacter jejuni (strain RM1221) protein is Polyphosphate kinase.